We begin with the raw amino-acid sequence, 416 residues long: MKIPEKPIFLIFVSLILASSLTFTATAKSTIEPCSSNDTCNALLGYTLYTDLKVSEVASLFQVDPISILLANAIDISYPDVENHILPSKLFLKIPITCSCVDGIRKSVSTHYKTRPSDNLGSIADSVYGGLVSAEQIQEANSVNDPSLLDVGTSLVIPLPCACFNGTDNSLPAVYLSYVVKEIDTLVGIARRYSTTITDLMNVNAMGAPDVSSGDILAVPLSACASKFPRYASDFGLIVPNGSYALAAGHCVQCSCALGSRNLYCEPASLAVSCSSMQCRNSNLMLGNITVQQTSAGCNVTTCDYNGIANGTILTMLTRSLQPRCPGPQQFAPLLAPPDTVPRDVMYAPAPSPDFDGPGSIASSPRSSMLPGGGILPGNPANGPAGSISTASASSVSYFFITFLISIASFSLALSS.

The signal sequence occupies residues 1 to 27 (MKIPEKPIFLIFVSLILASSLTFTATA). 4 disulfide bridges follow: Cys-34-Cys-100, Cys-40-Cys-163, Cys-98-Cys-161, and Cys-100-Cys-163. N-linked (GlcNAc...) asparagine glycosylation occurs at Asn-37. Positions 110–157 (THYKTRPSDNLGSIADSVYGGLVSAEQIQEANSVNDPSLLDVGTSLVI) constitute a LysM 1 domain. N-linked (GlcNAc...) asparagine glycosylation is present at Asn-165. The LysM 2 domain occupies 176–219 (LSYVVKEIDTLVGIARRYSTTITDLMNVNAMGAPDVSSGDILAV). 2 disulfide bridges follow: Cys-224–Cys-256 and Cys-251–Cys-279. Asn-241 carries N-linked (GlcNAc...) asparagine glycosylation. 3 N-linked (GlcNAc...) asparagine glycosylation sites follow: Asn-288, Asn-299, and Asn-310. The segment at 356–376 (DGPGSIASSPRSSMLPGGGIL) is disordered. A lipid anchor (GPI-anchor amidated alanine) is attached at Ala-391. A propeptide spans 392–416 (SASSVSYFFITFLISIASFSLALSS) (removed in mature form).

Interacts with peptidoglycans.

It localises to the cell membrane. It is found in the secreted. In terms of biological role, required as a cell surface receptor for peptidoglycan (PGN) elicitor signaling leading to innate immunity. Plays an essential role in detecting PGNs and restricting bacterial growth (of Pseudomonas syringae pv. tomato DC3000 for example). This chain is LysM domain-containing GPI-anchored protein 1 (LYM1), found in Arabidopsis thaliana (Mouse-ear cress).